Reading from the N-terminus, the 570-residue chain is Alpha-glucosidase (570 aa).

The Nucleophile role is filled by aspartate 206. Residue glutamate 263 is the Proton donor of the active site.

It belongs to the glycosyl hydrolase 13 family.

The enzyme catalyses Hydrolysis of terminal, non-reducing (1-&gt;4)-linked alpha-D-glucose residues with release of alpha-D-glucose.. The sequence is that of Alpha-glucosidase (MAL2) from Candida albicans (Yeast).